Consider the following 231-residue polypeptide: MAKLSKRNRAIREKIEAGKLYPVEEAVALLAELSAVKFKESVDVAVNLGVDPRKSDQNVRGASVLPHGTGKTVRVAVFAQGAKAEEAKEAGADVVGFDDLAEQVQGGEINFDVVIASPDAMRVVGKLGTILGPRGLMPNPKVGTVTPDVAQAVKNAKGGQVRYRTDKGGIIHCTVGQVGFDTNAIKENVEALIADLKKAKPSSAKGTFFKKVTLSTTMGPGLSIDPASLVM.

This sequence belongs to the universal ribosomal protein uL1 family. Part of the 50S ribosomal subunit.

Binds directly to 23S rRNA. The L1 stalk is quite mobile in the ribosome, and is involved in E site tRNA release. In terms of biological role, protein L1 is also a translational repressor protein, it controls the translation of the L11 operon by binding to its mRNA. The chain is Large ribosomal subunit protein uL1 from Alcanivorax borkumensis (strain ATCC 700651 / DSM 11573 / NCIMB 13689 / SK2).